The primary structure comprises 157 residues: 6,7-dimethyl-8-ribityllumazine synthase (157 aa).

Residues Phe23, 57-59 (AFE), and 81-83 (AVI) each bind 5-amino-6-(D-ribitylamino)uracil. 86 to 87 (ST) provides a ligand contact to (2S)-2-hydroxy-3-oxobutyl phosphate. His89 functions as the Proton donor in the catalytic mechanism. Residue Phe114 participates in 5-amino-6-(D-ribitylamino)uracil binding. Position 128 (Arg128) interacts with (2S)-2-hydroxy-3-oxobutyl phosphate.

The protein belongs to the DMRL synthase family.

The catalysed reaction is (2S)-2-hydroxy-3-oxobutyl phosphate + 5-amino-6-(D-ribitylamino)uracil = 6,7-dimethyl-8-(1-D-ribityl)lumazine + phosphate + 2 H2O + H(+). Its pathway is cofactor biosynthesis; riboflavin biosynthesis; riboflavin from 2-hydroxy-3-oxobutyl phosphate and 5-amino-6-(D-ribitylamino)uracil: step 1/2. In terms of biological role, catalyzes the formation of 6,7-dimethyl-8-ribityllumazine by condensation of 5-amino-6-(D-ribitylamino)uracil with 3,4-dihydroxy-2-butanone 4-phosphate. This is the penultimate step in the biosynthesis of riboflavin. The sequence is that of 6,7-dimethyl-8-ribityllumazine synthase from Desulfosudis oleivorans (strain DSM 6200 / JCM 39069 / Hxd3) (Desulfococcus oleovorans).